The sequence spans 235 residues: Ribosomal RNA small subunit methyltransferase G (235 aa).

S-adenosyl-L-methionine is bound by residues Gly74, Phe79, 97–99, 125–126, and Arg144; these read EAT and AE.

The protein belongs to the methyltransferase superfamily. RNA methyltransferase RsmG family.

Its subcellular location is the cytoplasm. Specifically methylates the N7 position of a guanine in 16S rRNA. This chain is Ribosomal RNA small subunit methyltransferase G, found in Dehalococcoides mccartyi (strain ATCC BAA-2100 / JCM 16839 / KCTC 5957 / BAV1).